Reading from the N-terminus, the 442-residue chain is Trigger factor (442 aa).

Residues 165-250 (DDRVIIDFEG…LQKVMAPELP (86 aa)) enclose the PPIase FKBP-type domain.

This sequence belongs to the FKBP-type PPIase family. Tig subfamily.

It localises to the cytoplasm. It catalyses the reaction [protein]-peptidylproline (omega=180) = [protein]-peptidylproline (omega=0). Functionally, involved in protein export. Acts as a chaperone by maintaining the newly synthesized protein in an open conformation. Functions as a peptidyl-prolyl cis-trans isomerase. The sequence is that of Trigger factor from Coxiella burnetii (strain RSA 493 / Nine Mile phase I).